Reading from the N-terminus, the 1397-residue chain is Ankyrin repeat domain-containing protein 30A (1397 aa).

6 ANK repeats span residues 72 to 101, 105 to 134, 138 to 167, 171 to 200, 204 to 233, and 237 to 271; these read QKRT…QLDV, EHRT…DINL, YGNT…VIEV, ASLT…NANA, YKCT…DVFA, and CGVT…HQNT. A compositionally biased stretch (polar residues) spans 267 to 279; it reads NHQNTNPEGTSAG. 4 disordered regions span residues 267–376, 453–482, 782–807, and 902–931; these read NHQN…TWPA, PTKE…EYSC, QTLR…WDSE, and TLRA…LRET. Basic and acidic residues-rich tracts occupy residues 290-304 and 312-326; these read RTPD…KTPD. Residues 455-467 show a composition bias toward polar residues; it reads KESSTKASANDQR. Composition is skewed to basic and acidic residues over residues 782 to 800 and 913 to 931; these read QTLR…KDYE and SKQK…LRET. Coiled-coil stretches lie at residues 998-1188 and 1282-1327; these read VLKK…KQDK and EHAQ…FQLQ.

Mainly expressed in breast and testis. A very faint signal is detected in placenta. Also expressed in many breast cancer cells.

The sequence is that of Ankyrin repeat domain-containing protein 30A (ANKRD30A) from Homo sapiens (Human).